A 197-amino-acid chain; its full sequence is Recombination protein RecR (197 aa).

The C4-type zinc-finger motif lies at 57-72 (CSVCFGITEEDPCRLC). The Toprim domain occupies 79–174 (TSLCVVEEPQ…RVTRLAHGIP (96 aa)).

This sequence belongs to the RecR family.

In terms of biological role, may play a role in DNA repair. It seems to be involved in an RecBC-independent recombinational process of DNA repair. It may act with RecF and RecO. This chain is Recombination protein RecR, found in Geobacter metallireducens (strain ATCC 53774 / DSM 7210 / GS-15).